A 512-amino-acid chain; its full sequence is Cytochrome P450 monooxygenase astB (512 aa).

The chain crosses the membrane as a helical span at residues 5 to 25; the sequence is DLSFPAAIGAVFGAVAISVAA. Cysteine 452 serves as a coordination point for heme.

Belongs to the cytochrome P450 family. The cofactor is heme.

The protein resides in the membrane. The protein operates within secondary metabolite biosynthesis; terpenoid biosynthesis. Cytochrome P450 monooxygenase; part of the gene cluster that mediates the biosynthesis of the sesquiterpenoid aspterric acid (AA), an inhibitor of dihydroxy-acid dehydratase (DHAD) effective as an herbicide. AstB catalyzes the second step within the pathway and converts (-)-daucane produced by the terpene cyclase astA into an alpha-epoxy carboxylate intermediate which is further converted into the tricyclic aspterric acid by the cytochrome P450 monooxygenase astC. The protein is Cytochrome P450 monooxygenase astB of Aspergillus terreus (strain NIH 2624 / FGSC A1156).